We begin with the raw amino-acid sequence, 253 residues long: Methionine aminopeptidase (253 aa).

His-78 provides a ligand contact to substrate. A divalent metal cation contacts are provided by Asp-95, Asp-106, and His-169. His-176 provides a ligand contact to substrate. A divalent metal cation contacts are provided by Glu-206 and Glu-237.

It belongs to the peptidase M24A family. Methionine aminopeptidase type 1 subfamily. Monomer. Co(2+) is required as a cofactor. Zn(2+) serves as cofactor. The cofactor is Mn(2+). Requires Fe(2+) as cofactor.

It carries out the reaction Release of N-terminal amino acids, preferentially methionine, from peptides and arylamides.. In terms of biological role, removes the N-terminal methionine from nascent proteins. The N-terminal methionine is often cleaved when the second residue in the primary sequence is small and uncharged (Met-Ala-, Cys, Gly, Pro, Ser, Thr, or Val). Requires deformylation of the N(alpha)-formylated initiator methionine before it can be hydrolyzed. The protein is Methionine aminopeptidase of Helicobacter pylori (strain ATCC 700392 / 26695) (Campylobacter pylori).